The following is a 679-amino-acid chain: UvrABC system protein B (679 aa).

One can recognise a Helicase ATP-binding domain in the interval 25-176; it reads EGVNGGERYQ…NLRGSLRDLV (152 aa). An ATP-binding site is contributed by 38 to 45; it reads GATGTGKT. Positions 91–114 match the Beta-hairpin motif; sequence YYDYYQPEAYVPVSDTYIAKTASI. The 163-residue stretch at 429–591 folds into the Helicase C-terminal domain; the sequence is QVDDLLGEIR…ITPTAAGKKA (163 aa). Residues 638 to 673 enclose the UVR domain; sequence PELIDQLELKMKESAKKLDFEEAANLRDRIKKLRQK.

Belongs to the UvrB family. Forms a heterotetramer with UvrA during the search for lesions. Interacts with UvrC in an incision complex.

The protein localises to the cytoplasm. Functionally, the UvrABC repair system catalyzes the recognition and processing of DNA lesions. A damage recognition complex composed of 2 UvrA and 2 UvrB subunits scans DNA for abnormalities. Upon binding of the UvrA(2)B(2) complex to a putative damaged site, the DNA wraps around one UvrB monomer. DNA wrap is dependent on ATP binding by UvrB and probably causes local melting of the DNA helix, facilitating insertion of UvrB beta-hairpin between the DNA strands. Then UvrB probes one DNA strand for the presence of a lesion. If a lesion is found the UvrA subunits dissociate and the UvrB-DNA preincision complex is formed. This complex is subsequently bound by UvrC and the second UvrB is released. If no lesion is found, the DNA wraps around the other UvrB subunit that will check the other stand for damage. This chain is UvrABC system protein B, found in Synechococcus sp. (strain CC9311).